Reading from the N-terminus, the 107-residue chain is Ig kappa chain V-VI region NQ6-8.3.1 (107 aa).

The segment at 1–23 (QIVLTQSPAIMSASPGQKVTMTC) is framework-1. The cysteines at positions 23 and 87 are disulfide-linked. Residues 24–33 (SASSSVSYMH) form a complementarity-determining-1 region. Residues 34-48 (WYQQKSGTSPKRWIY) are framework-2. Residues 49–55 (DTSKLAS) form a complementarity-determining-2 region. The interval 56–87 (GXPARFSGSGSATSYSLTITSMQAEDAATYYC) is framework-3. The segment at 88–96 (QQWSSNPLT) is complementarity-determining-3. The framework-4 stretch occupies residues 97–106 (FGAGTKLELK).

Functionally, anti-2-phenyl oxazolone (PHOX) Antibody. The polypeptide is Ig kappa chain V-VI region NQ6-8.3.1 (Mus musculus (Mouse)).